Reading from the N-terminus, the 61-residue chain is Probable tautomerase BH3814 (61 aa).

The active-site Proton acceptor; via imino nitrogen is proline 2.

Belongs to the 4-oxalocrotonate tautomerase family.

This Halalkalibacterium halodurans (strain ATCC BAA-125 / DSM 18197 / FERM 7344 / JCM 9153 / C-125) (Bacillus halodurans) protein is Probable tautomerase BH3814.